The following is a 1518-amino-acid chain: WD repeat-containing protein 62 (1518 aa).

Alanine 2 bears the N-acetylalanine mark. Serine 33 is subject to Phosphoserine. At threonine 46 the chain carries Phosphothreonine. Serine 49 carries the post-translational modification Phosphoserine. Threonine 50 is subject to Phosphothreonine. Serine 52 carries the phosphoserine modification. WD repeat units follow at residues 109 to 150 (TARK…QVAE), 153 to 194 (GHKY…VVAS), 196 to 234 (KVSC…ETKV), 291 to 330 (INLK…YLAN), 357 to 396 (AVYP…RVGK), 402 to 450 (FHSS…DSHW), 490 to 529 (DVKA…ELVK), 532 to 574 (AHDA…NLEQ), 578 to 618 (DHSS…DGLH), 626 to 665 (AEKT…QKKC), 671 to 713 (GDEG…KMFG), and 714 to 752 (HSEI…TNCM). Position 501 is a phosphoserine (serine 501). A compositionally biased stretch (basic and acidic residues) spans 762–772 (RQQQQHTNDKK). 2 disordered regions span residues 762-824 (RQQQ…DPDP) and 908-935 (ASLL…KESS). A compositionally biased stretch (polar residues) spans 781–790 (TYVSTPSEIH). Residues 797-809 (QTEDDLEEECEPE) show a composition bias toward acidic residues. Residues 803–846 (EEECEPEEMLKTPSKDSLDPDPRCLLTNGKLPLWAKRLLGDDDV) form a WD 13 repeat. Over residues 810-824 (EMLKTPSKDSLDPDP) the composition is skewed to basic and acidic residues. Low complexity predominate over residues 908-920 (ASLLSESESPQEA). At serine 944 the chain carries Phosphoserine. The tract at residues 962 to 1055 (EVEAGPGDQQ…PSSSLPQTPE (94 aa)) is disordered. 2 stretches are compositionally biased toward polar residues: residues 971–981 (QGDSYLRVSSD) and 1045–1054 (VPSSSLPQTP). Residue threonine 1053 is modified to Phosphothreonine. A phosphoserine mark is found at serine 1070, serine 1093, serine 1101, serine 1123, serine 1144, serine 1228, serine 1248, and serine 1249. A WD 14 repeat occupies 1132–1173 (GGSQPRAGTGYASPDRTHVLAAGKAEETLEAWRPPPPCLTSL). One copy of the WD 15 repeat lies at 1255–1293 (SLGQELQAITTATTPSLDSEGQEPALRSWGNHEARANLR). Residue threonine 1268 is modified to Phosphothreonine. The disordered stretch occupies residues 1339-1377 (FRPSLPAPESPGLPAHPSNPQLPEARPGIPGGTASLLEP).

Can form homodimers (via C-terminus). Interacts (via C-terminus) with MAPKBP1 (via C-terminus). Interacts with CDK5RAP2, CEP152, CEP63 and KIAA0753. CEP63, CDK5RAP2, CEP152, WDR62 are proposed to form a stepwise assembled complex at the centrosome forming a ring near parental centrioles. As to expression, present in fetal brain, enriched within the ventricular and subventricular zone (at protein level). In the embryonic brain it is expressed in mitotic neural precursor cells.

Its subcellular location is the nucleus. The protein localises to the cytoplasm. It is found in the cytoskeleton. It localises to the spindle pole. The protein resides in the microtubule organizing center. Its subcellular location is the centrosome. The protein localises to the centriole. In terms of biological role, required for cerebral cortical development. Plays a role in neuronal proliferation and migration. Plays a role in mother-centriole-dependent centriole duplication; the function also seems to involve CEP152, CDK5RAP2 and CEP63 through a stepwise assembled complex at the centrosome that recruits CDK2 required for centriole duplication. In Homo sapiens (Human), this protein is WD repeat-containing protein 62 (WDR62).